Here is a 276-residue protein sequence, read N- to C-terminus: NH(3)-dependent NAD(+) synthetase (276 aa).

ATP is bound at residue 43-50 (GISGGVDS). Asp-49 lines the Mg(2+) pocket. Arg-146 serves as a coordination point for deamido-NAD(+). An ATP-binding site is contributed by Thr-166. Glu-171 contributes to the Mg(2+) binding site. The deamido-NAD(+) site is built by Lys-179 and Asp-186. 2 residues coordinate ATP: Lys-195 and Thr-217. 266-267 (HK) serves as a coordination point for deamido-NAD(+).

The protein belongs to the NAD synthetase family. Homodimer.

It carries out the reaction deamido-NAD(+) + NH4(+) + ATP = AMP + diphosphate + NAD(+) + H(+). The protein operates within cofactor biosynthesis; NAD(+) biosynthesis; NAD(+) from deamido-NAD(+) (ammonia route): step 1/1. In terms of biological role, catalyzes the ATP-dependent amidation of deamido-NAD to form NAD. Uses ammonia as a nitrogen source. The polypeptide is NH(3)-dependent NAD(+) synthetase (Shewanella baltica (strain OS185)).